Reading from the N-terminus, the 236-residue chain is Small ribosomal subunit protein uS2c (236 aa).

In terms of assembly, component of the chloroplast small ribosomal subunit (SSU). Mature 70S chloroplast ribosomes of higher plants consist of a small (30S) and a large (50S) subunit. The 30S small subunit contains 1 molecule of ribosomal RNA (16S rRNA) and 24 different proteins. The 50S large subunit contains 3 rRNA molecules (23S, 5S and 4.5S rRNA) and 33 different proteins.

The protein localises to the plastid. It is found in the chloroplast. Component of the chloroplast ribosome (chloro-ribosome), a dedicated translation machinery responsible for the synthesis of chloroplast genome-encoded proteins, including proteins of the transcription and translation machinery and components of the photosynthetic apparatus. The protein is Small ribosomal subunit protein uS2c (rps2) of Spinacia oleracea (Spinach).